Reading from the N-terminus, the 194-residue chain is MSLLLLGWLPTGMTHQDPPSWGKPRSHRTLRCYSAEELSHGQAPPHLLTRSARWEQALPVALVASLEATGHRRQHEGPLAGTQCPVLRPEEVLEADTHERSISPWRYRIDTDENRYPQKLAVAECLCRGCINAKTGRETAALNSVQLLQSLLVLRRQPCSRDGTADPTPGSFAFHTEFIRVPVGCTCVLPRSTQ.

The signal sequence occupies residues 1–16 (MSLLLLGWLPTGMTHQ). 2 cysteine pairs are disulfide-bonded: Cys125–Cys185 and Cys130–Cys187.

It belongs to the IL-17 family. In terms of assembly, binds to a heterodimer formed by IL17RA and IL17RE. Expressed by epithelial cells after bacterial challenge. Low expression, if any, in lymphocytes.

Its subcellular location is the secreted. Functionally, cytokine that plays a crucial role in innate immunity of the epithelium, including to intestinal bacterial pathogens, in an autocrine manner. Stimulates the production of antibacterial peptides and pro-inflammatory molecules for host defense by signaling through the NFKB and MAPK pathways. Acts synergically with IL22, TNF and IL1B in inducing antibacterial peptides. May have protective function by maintaining epithelial homeostasis after an inflammatory challenge, such as that caused in the intestine by dextran sulfate sodium in a colitis model. May also promote an inflammatory phenotype, such as skin in a psoriasis model. Enhanced IL17C/IL17RE signaling may also lead to greater susceptibility to autoimmune diseases, such as autoimmune encephalitis. The sequence is that of Interleukin-17C (Il17c) from Mus musculus (Mouse).